Consider the following 364-residue polypeptide: 4-hydroxy-3-methylbut-2-en-1-yl diphosphate synthase (flavodoxin) (364 aa).

[4Fe-4S] cluster-binding residues include Cys-268, Cys-271, Cys-303, and Glu-310.

Belongs to the IspG family. [4Fe-4S] cluster is required as a cofactor.

The enzyme catalyses (2E)-4-hydroxy-3-methylbut-2-enyl diphosphate + oxidized [flavodoxin] + H2O + 2 H(+) = 2-C-methyl-D-erythritol 2,4-cyclic diphosphate + reduced [flavodoxin]. It participates in isoprenoid biosynthesis; isopentenyl diphosphate biosynthesis via DXP pathway; isopentenyl diphosphate from 1-deoxy-D-xylulose 5-phosphate: step 5/6. Converts 2C-methyl-D-erythritol 2,4-cyclodiphosphate (ME-2,4cPP) into 1-hydroxy-2-methyl-2-(E)-butenyl 4-diphosphate. The polypeptide is 4-hydroxy-3-methylbut-2-en-1-yl diphosphate synthase (flavodoxin) (Anoxybacillus flavithermus (strain DSM 21510 / WK1)).